The sequence spans 195 residues: Transcription repressor OFP17 (195 aa).

Residues 130 to 190 enclose the OVATE domain; sequence EDNAVEDACR…SRFYGELCRD (61 aa).

It is found in the nucleus. Its function is as follows. Transcriptional repressor that may regulate multiple aspects of plant growth and development through the regulation of BEL1-LIKE (BLH) and KNOX TALE (KNAT) homeodomain transcription factors. This Arabidopsis thaliana (Mouse-ear cress) protein is Transcription repressor OFP17 (OFP17).